The sequence spans 211 residues: GTP-binding protein ypt5 (211 aa).

21–28 (GDSAVGKS) contributes to the GTP binding site. The Effector region motif lies at 43–51 (RESTIGAAF). GTP contacts are provided by residues 70-74 (DTAGQ) and 128-131 (NKLD). S-geranylgeranyl cysteine attachment occurs at residues Cys209 and Cys211. Cys211 is modified (cysteine methyl ester).

It belongs to the small GTPase superfamily. Rab family.

It localises to the cell membrane. In terms of biological role, protein transport. Probably involved in vesicular traffic. This Schizosaccharomyces pombe (strain 972 / ATCC 24843) (Fission yeast) protein is GTP-binding protein ypt5 (ypt5).